A 213-amino-acid polypeptide reads, in one-letter code: Thiamine-phosphate synthase (213 aa).

Residues 40 to 44 and Asn72 contribute to the 4-amino-2-methyl-5-(diphosphooxymethyl)pyrimidine site; that span reads QYRDK. 2 residues coordinate Mg(2+): Asp73 and Asp91. Thr110 serves as a coordination point for 4-amino-2-methyl-5-(diphosphooxymethyl)pyrimidine. 137–139 provides a ligand contact to 2-[(2R,5Z)-2-carboxy-4-methylthiazol-5(2H)-ylidene]ethyl phosphate; it reads SHT. Lys140 provides a ligand contact to 4-amino-2-methyl-5-(diphosphooxymethyl)pyrimidine. Gly167 is a binding site for 2-[(2R,5Z)-2-carboxy-4-methylthiazol-5(2H)-ylidene]ethyl phosphate.

The protein belongs to the thiamine-phosphate synthase family. The cofactor is Mg(2+).

It catalyses the reaction 2-[(2R,5Z)-2-carboxy-4-methylthiazol-5(2H)-ylidene]ethyl phosphate + 4-amino-2-methyl-5-(diphosphooxymethyl)pyrimidine + 2 H(+) = thiamine phosphate + CO2 + diphosphate. It carries out the reaction 2-(2-carboxy-4-methylthiazol-5-yl)ethyl phosphate + 4-amino-2-methyl-5-(diphosphooxymethyl)pyrimidine + 2 H(+) = thiamine phosphate + CO2 + diphosphate. The enzyme catalyses 4-methyl-5-(2-phosphooxyethyl)-thiazole + 4-amino-2-methyl-5-(diphosphooxymethyl)pyrimidine + H(+) = thiamine phosphate + diphosphate. The protein operates within cofactor biosynthesis; thiamine diphosphate biosynthesis; thiamine phosphate from 4-amino-2-methyl-5-diphosphomethylpyrimidine and 4-methyl-5-(2-phosphoethyl)-thiazole: step 1/1. Condenses 4-methyl-5-(beta-hydroxyethyl)thiazole monophosphate (THZ-P) and 2-methyl-4-amino-5-hydroxymethyl pyrimidine pyrophosphate (HMP-PP) to form thiamine monophosphate (TMP). The chain is Thiamine-phosphate synthase from Stutzerimonas stutzeri (strain A1501) (Pseudomonas stutzeri).